A 113-amino-acid chain; its full sequence is Protein AaeX (113 aa).

The next 2 membrane-spanning stretches (helical) occupy residues 3–23 (LLPV…EMIL) and 43–63 (FVWH…YLIS).

This sequence belongs to the AaeX family.

Its subcellular location is the cell membrane. The chain is Protein AaeX from Sodalis glossinidius (strain morsitans).